We begin with the raw amino-acid sequence, 154 residues long: Ribonuclease H (154 aa).

Positions methionine 1 to glutamate 142 constitute an RNase H type-1 domain. Mg(2+) is bound by residues aspartate 10, glutamate 48, aspartate 70, and aspartate 134.

The protein belongs to the RNase H family. Monomer. Requires Mg(2+) as cofactor.

Its subcellular location is the cytoplasm. The enzyme catalyses Endonucleolytic cleavage to 5'-phosphomonoester.. Endonuclease that specifically degrades the RNA of RNA-DNA hybrids. The protein is Ribonuclease H of Actinobacillus succinogenes (strain ATCC 55618 / DSM 22257 / CCUG 43843 / 130Z).